A 548-amino-acid chain; its full sequence is Glucan 1,4-alpha-maltotetraohydrolase (548 aa).

An N-terminal signal peptide occupies residues M1–A21. Residues D22, Q23, H34, D37, and E38 each contribute to the Ca(2+) site. Y99–F100 serves as a coordination point for substrate. Residue N137 participates in Ca(2+) binding. H138 provides a ligand contact to substrate. C161 and C171 are oxidised to a cystine. D172 and D175 together coordinate Ca(2+). F177–D181 provides a ligand contact to substrate. D183 is a binding site for Ca(2+). R212 is a substrate binding site. D214 functions as the Nucleophile in the catalytic mechanism. Residue R217–G218 participates in substrate binding. Ca(2+) is bound at residue G218. A disulfide bond links C237 and C272. The Proton donor role is filled by E240. Positions 314 and 326 each coordinate substrate. Positions G446–L548 constitute a CBM20 domain. Residues Q529–A542 are compositionally biased toward polar residues. The disordered stretch occupies residues Q529–L548.

The protein belongs to the glycosyl hydrolase 13 family. In terms of assembly, monomer. It depends on Ca(2+) as a cofactor.

It is found in the secreted. It carries out the reaction Hydrolysis of (1-&gt;4)-alpha-D-glucosidic linkages in amylaceous polysaccharides, to remove successive maltotetraose residues from the non-reducing chain ends.. Its pathway is glycan degradation; starch degradation. The sequence is that of Glucan 1,4-alpha-maltotetraohydrolase (amyP) from Stutzerimonas stutzeri (Pseudomonas stutzeri).